We begin with the raw amino-acid sequence, 342 residues long: Phosphate acyltransferase (342 aa).

The protein belongs to the PlsX family. In terms of assembly, homodimer. Probably interacts with PlsY.

Its subcellular location is the cytoplasm. The catalysed reaction is a fatty acyl-[ACP] + phosphate = an acyl phosphate + holo-[ACP]. Its pathway is lipid metabolism; phospholipid metabolism. Functionally, catalyzes the reversible formation of acyl-phosphate (acyl-PO(4)) from acyl-[acyl-carrier-protein] (acyl-ACP). This enzyme utilizes acyl-ACP as fatty acyl donor, but not acyl-CoA. The sequence is that of Phosphate acyltransferase from Shewanella baltica (strain OS155 / ATCC BAA-1091).